We begin with the raw amino-acid sequence, 184 residues long: ATP-dependent 6-phosphofructokinase (184 aa).

Residues 1–184 (GGDGSLTGAN…TRTTVLGHIQ (184 aa)) form an N-terminal catalytic PFK domain 1 region. Position 2 to 5 (2 to 5 (GDGS)) interacts with ATP. Mg(2+) is bound at residue D3. Substrate-binding positions include 48 to 50 (SID), R85, 92 to 94 (MGR), E148, R176, and 182 to 184 (HIQ). D50 (proton acceptor) is an active-site residue.

The protein belongs to the phosphofructokinase type A (PFKA) family. ATP-dependent PFK group I subfamily. Eukaryotic two domain clade 'E' sub-subfamily. In terms of assembly, homotetramer. The cofactor is Mg(2+).

It is found in the cytoplasm. The enzyme catalyses beta-D-fructose 6-phosphate + ATP = beta-D-fructose 1,6-bisphosphate + ADP + H(+). It functions in the pathway carbohydrate degradation; glycolysis; D-glyceraldehyde 3-phosphate and glycerone phosphate from D-glucose: step 3/4. Allosterically activated by ADP, AMP, or fructose 2,6-bisphosphate, and allosterically inhibited by ATP or citrate. Catalyzes the phosphorylation of D-fructose 6-phosphate to fructose 1,6-bisphosphate by ATP, the first committing step of glycolysis. This is ATP-dependent 6-phosphofructokinase (PFK) from Calanus finmarchicus (Calanus tonsus).